Consider the following 397-residue polypeptide: uncharacterized protein (397 aa).

Transmembrane regions (helical) follow at residues 10-30 (FIIF…YAVM), 48-68 (GLLV…VTII), 76-96 (PVLL…ALAP), 106-126 (ILSA…ASEM), 141-161 (GGLT…GDVL), 165-185 (AVFS…MAAV), 209-229 (LFSF…YTFI), 242-262 (VGIT…NFFA), 274-294 (MIGV…IAIY), 296-316 (AAAI…PPLL), 334-354 (VSVS…GMIL), and 363-383 (LFAG…FAHL).

The protein belongs to the major facilitator superfamily.

It localises to the cell membrane. This is an uncharacterized protein from Bacillus subtilis (strain 168).